The chain runs to 43 residues: Protein PsbN (43 aa).

The chain crosses the membrane as a helical span at residues 4-24 (AIVLSISMAAVVVAITGISIY).

The protein belongs to the PsbN family.

The protein resides in the cellular thylakoid membrane. In terms of biological role, may play a role in photosystem I and II biogenesis. The polypeptide is Protein PsbN (Nostoc punctiforme (strain ATCC 29133 / PCC 73102)).